A 256-amino-acid chain; its full sequence is Trans-aconitate 2-methyltransferase (256 aa).

This sequence belongs to the methyltransferase superfamily. Tam family.

The protein resides in the cytoplasm. The catalysed reaction is trans-aconitate + S-adenosyl-L-methionine = (E)-3-(methoxycarbonyl)pent-2-enedioate + S-adenosyl-L-homocysteine. Its function is as follows. Catalyzes the S-adenosylmethionine monomethyl esterification of trans-aconitate. The polypeptide is Trans-aconitate 2-methyltransferase (Rhodopseudomonas palustris (strain BisB5)).